Consider the following 544-residue polypeptide: Chaperonin GroEL (544 aa).

Residues 30-33 (TLGP), Lys51, 87-91 (DGTTT), Gly415, 481-483 (DAL), and Asp497 each bind ATP.

It belongs to the chaperonin (HSP60) family. In terms of assembly, forms a cylinder of 14 subunits composed of two heptameric rings stacked back-to-back. Interacts with the co-chaperonin GroES.

The protein localises to the cytoplasm. It carries out the reaction ATP + H2O + a folded polypeptide = ADP + phosphate + an unfolded polypeptide.. Functionally, together with its co-chaperonin GroES, plays an essential role in assisting protein folding. The GroEL-GroES system forms a nano-cage that allows encapsulation of the non-native substrate proteins and provides a physical environment optimized to promote and accelerate protein folding. The protein is Chaperonin GroEL of Chlamydia muridarum (strain MoPn / Nigg).